The primary structure comprises 874 residues: Isopimaradiene synthase, chloroplastic (874 aa).

The segment covering 1–12 (MALPSSSLSSRI) has biased composition (polar residues). Positions 1–20 (MALPSSSLSSRIPTGPHPLT) are disordered. Residues 1-37 (MALPSSSLSSRIPTGPHPLTHTQCIPHFSTTINAGIS) constitute a chloroplast transit peptide. Mg(2+) is bound by residues aspartate 407, aspartate 409, aspartate 626, aspartate 630, asparagine 770, and glutamate 778. The DXDD motif motif lies at 407 to 410 (DIDD). Positions 626-630 (DDLYD) match the DDXXD motif motif.

Belongs to the terpene synthase family. Tpsd subfamily. Mg(2+) is required as a cofactor. The cofactor is Mn(2+).

The protein resides in the plastid. Its subcellular location is the chloroplast. The enzyme catalyses (+)-copalyl diphosphate = isopimara-8(14),15-diene + diphosphate. The protein operates within terpene metabolism; oleoresin biosynthesis. Terpene synthase (TPS) involved in the biosynthesis of diterpene natural products included in conifer oleoresin secretions and volatile emissions; these compounds contribute to biotic and abiotic stress defense against herbivores and pathogens. Catalyzes the conversion of (+)-copalyl diphosphate ((+)-CPP) to isopimaradiene. This is Isopimaradiene synthase, chloroplastic from Picea sitchensis (Sitka spruce).